A 239-amino-acid chain; its full sequence is Sugar fermentation stimulation protein homolog (239 aa).

Belongs to the SfsA family.

The sequence is that of Sugar fermentation stimulation protein homolog from Microcystis aeruginosa (strain NIES-843 / IAM M-2473).